The primary structure comprises 317 residues: Melanocyte-stimulating hormone receptor (317 aa).

Topologically, residues 1–37 (MPVQGSQRRLLGSLNSTPTATPKLGLAANQTGAWCLE) are extracellular. Residue Asn29 is glycosylated (N-linked (GlcNAc...) asparagine). A helical transmembrane segment spans residues 38 to 63 (VSIPDGLFLSLGLVSLVENVLVVAAI). Topologically, residues 64–72 (AKNRNLHSP) are cytoplasmic. Residues 73–93 (MYCFICCLALSDLLVSGSNML) form a helical membrane-spanning segment. Over 94 to 118 (ETAVILLLEAGALAARAAVVQQLDN) the chain is Extracellular. Residues 119–140 (VIDVITCSSMLSSLCFLGAIAV) traverse the membrane as a helical segment. Over 141-163 (DRYISIFYALRYHSIVTLPRAQR) the chain is Cytoplasmic. A helical transmembrane segment spans residues 164–183 (VVAAIWVASVLFSTLFIAYY). The Extracellular portion of the chain corresponds to 184–191 (DHAAVLLC). Residues 192 to 211 (LVVFFLAMLVLMAVLYVHML) form a helical membrane-spanning segment. Topologically, residues 212 to 240 (ARACQHAQGIAQLHKRQRPAHQGFGLKGA) are cytoplasmic. A helical membrane pass occupies residues 241–266 (ATLTILLGIFFLCWGPFFLHLTLIVL). At 267 to 279 (CPQHPTCSCIFKN) the chain is on the extracellular side. The helical transmembrane segment at 280–300 (FNLFLALIICNAIIDPLIYAF) threads the bilayer. Topologically, residues 301–317 (RSQELRRTLKEVLLCSW) are cytoplasmic. Cys315 is lipidated: S-palmitoyl cysteine.

Belongs to the G-protein coupled receptor 1 family. Interacts with MGRN1, but does not undergo MGRN1-mediated ubiquitination; this interaction competes with GNAS-binding and thus inhibits agonist-induced cAMP production. Interacts with OPN3; the interaction results in a decrease in MC1R-mediated cAMP signaling and ultimately a decrease in melanin production in melanocytes.

The protein resides in the cell membrane. Receptor for MSH (alpha, beta and gamma) and ACTH. The activity of this receptor is mediated by G proteins which activate adenylate cyclase. Mediates melanogenesis, the production of eumelanin (black/brown) and phaeomelanin (red/yellow), via regulation of cAMP signaling in melanocytes. This is Melanocyte-stimulating hormone receptor (MC1R) from Colobus guereza (Mantled guereza).